The following is a 334-amino-acid chain: Ribosomal RNA small subunit methyltransferase H (334 aa).

S-adenosyl-L-methionine contacts are provided by residues 53-55 (GGH), Asp-72, Phe-99, Asp-122, and His-129.

Belongs to the methyltransferase superfamily. RsmH family.

The protein localises to the cytoplasm. The catalysed reaction is cytidine(1402) in 16S rRNA + S-adenosyl-L-methionine = N(4)-methylcytidine(1402) in 16S rRNA + S-adenosyl-L-homocysteine + H(+). Its function is as follows. Specifically methylates the N4 position of cytidine in position 1402 (C1402) of 16S rRNA. The sequence is that of Ribosomal RNA small subunit methyltransferase H from Leptospira interrogans serogroup Icterohaemorrhagiae serovar copenhageni (strain Fiocruz L1-130).